The following is a 336-amino-acid chain: Fructose-1,6-bisphosphatase class 1 (336 aa).

Mg(2+) is bound by residues Glu92, Asp115, Leu117, and Asp118. Substrate is bound by residues 118–121, Asn211, Tyr244, 262–264, and Lys274; these read DGSS and YLY. Residue Glu280 coordinates Mg(2+).

The protein belongs to the FBPase class 1 family. In terms of assembly, homotetramer. Mg(2+) is required as a cofactor.

Its subcellular location is the cytoplasm. The catalysed reaction is beta-D-fructose 1,6-bisphosphate + H2O = beta-D-fructose 6-phosphate + phosphate. Its pathway is carbohydrate biosynthesis; gluconeogenesis. This chain is Fructose-1,6-bisphosphatase class 1, found in Vibrio cholerae serotype O1 (strain ATCC 39541 / Classical Ogawa 395 / O395).